We begin with the raw amino-acid sequence, 569 residues long: 4-hydroxy-7-methoxy-3-oxo-3,4-dihydro-2H-1,4-benzoxazin-2-yl glucoside beta-D-glucosidase 1a, chloroplastic (569 aa).

The transit peptide at methionine 1–alanine 50 directs the protein to the chloroplast. A beta-D-glucoside is bound by residues glutamine 92, histidine 194, and asparagine 239–glutamate 240. The active-site Proton donor is glutamate 240. Cysteine 259 and cysteine 265 are oxidised to a cystine. Residues tyrosine 383, glutamate 456, tryptophan 504, glutamate 511–tryptophan 512, and phenylalanine 520 each bind a beta-D-glucoside. Residue glutamate 456 is the Nucleophile of the active site.

This sequence belongs to the glycosyl hydrolase 1 family. Homo- and heterohexamers. In terms of tissue distribution, expressed in young seedlings early after germination.

It localises to the plastid. Its subcellular location is the chloroplast. The enzyme catalyses Hydrolysis of terminal, non-reducing beta-D-glucosyl residues with release of beta-D-glucose.. It carries out the reaction DIMBOA beta-D-glucoside + H2O = DIMBOA + D-glucose. It catalyses the reaction DIBOA beta-D-glucoside + H2O = DIBOA + D-glucose. Functionally, acts in defense of young plant parts against pests via the production of hydroxamic acids from hydroxamic acid glucosides. Enzymatic activity is highly correlated with plant growth. The preferred substrate is DIMBOA-beta-D-glucoside. The protein is 4-hydroxy-7-methoxy-3-oxo-3,4-dihydro-2H-1,4-benzoxazin-2-yl glucoside beta-D-glucosidase 1a, chloroplastic (GLU1A) of Triticum aestivum (Wheat).